The following is a 327-amino-acid chain: Aspartate--ammonia ligase (327 aa).

It belongs to the class-II aminoacyl-tRNA synthetase family. AsnA subfamily.

Its subcellular location is the cytoplasm. The enzyme catalyses L-aspartate + NH4(+) + ATP = L-asparagine + AMP + diphosphate + H(+). It functions in the pathway amino-acid biosynthesis; L-asparagine biosynthesis; L-asparagine from L-aspartate (ammonia route): step 1/1. This chain is Aspartate--ammonia ligase, found in Bacillus cereus (strain ATCC 10987 / NRS 248).